The chain runs to 338 residues: Aspartate carbamoyltransferase catalytic subunit (338 aa).

The carbamoyl phosphate site is built by Arg71 and Thr72. Lys99 contacts L-aspartate. 3 residues coordinate carbamoyl phosphate: Arg121, His151, and Gln154. Residues Arg184 and Arg239 each coordinate L-aspartate. Carbamoyl phosphate contacts are provided by Gly280 and Pro281.

This sequence belongs to the aspartate/ornithine carbamoyltransferase superfamily. ATCase family. Heterododecamer (2C3:3R2) of six catalytic PyrB chains organized as two trimers (C3), and six regulatory PyrI chains organized as three dimers (R2).

It carries out the reaction carbamoyl phosphate + L-aspartate = N-carbamoyl-L-aspartate + phosphate + H(+). It functions in the pathway pyrimidine metabolism; UMP biosynthesis via de novo pathway; (S)-dihydroorotate from bicarbonate: step 2/3. Catalyzes the condensation of carbamoyl phosphate and aspartate to form carbamoyl aspartate and inorganic phosphate, the committed step in the de novo pyrimidine nucleotide biosynthesis pathway. The polypeptide is Aspartate carbamoyltransferase catalytic subunit (Stutzerimonas stutzeri (strain A1501) (Pseudomonas stutzeri)).